A 533-amino-acid polypeptide reads, in one-letter code: Purine-cytosine permease FCY2 (533 aa).

The Cytoplasmic segment spans residues 1-98 (MLEEGNNVYE…NAASMWFSAN (98 aa)). Residue Lys-16 forms a Glycyl lysine isopeptide (Lys-Gly) (interchain with G-Cter in ubiquitin) linkage. Ser-18 is modified (phosphoserine). A helical membrane pass occupies residues 99–119 (MVIASYALGALGPMVFGLNFG). Over 120–121 (QS) the chain is Extracellular. Residues 122 to 141 (VLVIIFFNIMGLIFVAFFSV) traverse the membrane as a helical segment. Residues 142–198 (FGAELGLRQMILSRYLVGNVTARIFSLINVIACVGWGIVNTSVSAQLLNMVNEGSGH) lie on the Cytoplasmic side of the membrane. The tract at residues 165-184 (IFSLINVIACVGWGIVNTSV) is surface seeking. Residues 199 to 218 (VCPIWAGCLIIIGGTVLVTF) form a helical membrane-spanning segment. Over 219 to 256 (FGYSVIHAYEKWSWVPNFAVFLVIIAQLSRSGKFKGGE) the chain is Extracellular. A helical membrane pass occupies residues 257–276 (WVGGATTAGSVLSFGSSIFG). Topologically, residues 277-300 (FAAGWTTYAADYTVYMPKSTNKYK) are cytoplasmic. A helical membrane pass occupies residues 301–320 (IFFSLVAGLAFPLFFTMILG). The Extracellular portion of the chain corresponds to 321-347 (AASAMAALNDPTWKAYYDKNAMGGVIY). The helical transmembrane segment at 348-367 (AILVPNSLNGFGQFCCVLLA) threads the bilayer. Residues 368 to 398 (LSTIANNIPNMYTVALSAQALWAPLAKIPRV) lie on the Cytoplasmic side of the membrane. Residues 399-418 (VWTMAGNAATLGISIPATYY) traverse the membrane as a helical segment. Topologically, residues 419 to 465 (FDGFMENFMDSIGYYLAIYIAISCSEHFFYRRSFSAYNIDDWDNWEH) are extracellular. The helical transmembrane segment at 466–485 (LPIGIAGTAALIVGAFGVAL) threads the bilayer. Residues 486 to 533 (GMCQTYWVGEIGRLIGKYGGDIGFELGASWAFIIYNILRPLELKYFGR) are Cytoplasmic-facing.

It belongs to the purine-cytosine permease (2.A.39) family. Post-translationally, not N-glycosylated.

It is found in the membrane. This permease has a broad specificity towards purines, and also transport cytosine and 5-methylcytosine but neither uracil nor thymine. The chain is Purine-cytosine permease FCY2 (FCY2) from Saccharomyces cerevisiae (strain ATCC 204508 / S288c) (Baker's yeast).